The following is a 197-amino-acid chain: Probable molybdenum cofactor guanylyltransferase (197 aa).

GTP contacts are provided by residues leucine 10–glycine 12, lysine 22, aspartate 73, and aspartate 102. Aspartate 102 contacts Mg(2+).

The protein belongs to the MobA family. Mg(2+) is required as a cofactor.

It localises to the cytoplasm. It carries out the reaction Mo-molybdopterin + GTP + H(+) = Mo-molybdopterin guanine dinucleotide + diphosphate. Its function is as follows. Transfers a GMP moiety from GTP to Mo-molybdopterin (Mo-MPT) cofactor (Moco or molybdenum cofactor) to form Mo-molybdopterin guanine dinucleotide (Mo-MGD) cofactor. This Methanothermobacter thermautotrophicus (strain ATCC 29096 / DSM 1053 / JCM 10044 / NBRC 100330 / Delta H) (Methanobacterium thermoautotrophicum) protein is Probable molybdenum cofactor guanylyltransferase.